The chain runs to 515 residues: 4-hydroxybenzoate brominase (decarboxylating) (515 aa).

Residues Ser13, Glu32, Val40, Phe41, His51, Val102, and Gln364 each contribute to the FAD site.

This sequence belongs to the FMO family. It depends on FAD as a cofactor.

The enzyme catalyses 2 bromide + 4-hydroxybenzoate + 2 NADPH + 2 O2 + 5 H(+) = 2,4-dibromophenol + CO2 + 2 NADP(+) + 4 H2O. It catalyses the reaction bromide + 4-hydroxybenzoate + NADPH + O2 + 2 H(+) = 3-bromo-4-hydroxybenzoate + NADP(+) + 2 H2O. It carries out the reaction 3-bromo-4-hydroxybenzoate + bromide + NADPH + O2 + 3 H(+) = 2,4-dibromophenol + CO2 + NADP(+) + 2 H2O. The catalysed reaction is 3,4-dihydroxybenzoate + 2 bromide + 2 NADPH + 2 O2 + 5 H(+) = 3,5-dibromobenzene-1,2-diol + CO2 + 2 NADP(+) + 4 H2O. The enzyme catalyses 3,4-dihydroxybenzoate + bromide + NADPH + O2 + 2 H(+) = 3-bromo-4,5-dihydroxybenzoate + NADP(+) + 2 H2O. It catalyses the reaction 3-bromo-4,5-dihydroxybenzoate + bromide + NADPH + O2 + 3 H(+) = 3,5-dibromobenzene-1,2-diol + CO2 + NADP(+) + 2 H2O. Activity is abolished in the absence of either bromide or NADPH, while a partial reduction in activity is observed upon omission of FAD. Activity does not require the addition of a flavin reductase to regenerate FADH(2) in situ. In terms of biological role, brominase involved in the biosynthesis of polybrominated aromatic organic compounds. Catalyzes the bromination of 4-hydroxybenzoate (4-HBA) to 3-bromo-4-hydroxybenzoate, followed by bromination and decarboxylation of 3-bromo-4-hydroxybenzoate to 2,4-dibromophenol. Can also use 3,4-dihydroxybenzoate, with lower efficiency, forming 3-bromo-4,5-dihydroxybenzoate and 3,5-dibromobenzene-1,2-diol. Can utilize iodide in vivo leading to the formation of iodophenols, but cannot use chloride. The polypeptide is 4-hydroxybenzoate brominase (decarboxylating) (Pseudoalteromonas luteoviolacea (strain 2ta16)).